Here is a 401-residue protein sequence, read N- to C-terminus: Argininosuccinate synthase (401 aa).

A9–S17 is a binding site for ATP. Y86 is an L-citrulline binding site. G116 provides a ligand contact to ATP. T118, N122, and D123 together coordinate L-aspartate. N122 is a binding site for L-citrulline. L-citrulline-binding residues include R126, S174, S183, E259, and Y271.

This sequence belongs to the argininosuccinate synthase family. Type 1 subfamily. Homotetramer.

The protein resides in the cytoplasm. The catalysed reaction is L-citrulline + L-aspartate + ATP = 2-(N(omega)-L-arginino)succinate + AMP + diphosphate + H(+). It functions in the pathway amino-acid biosynthesis; L-arginine biosynthesis; L-arginine from L-ornithine and carbamoyl phosphate: step 2/3. This chain is Argininosuccinate synthase, found in Bacillus anthracis (strain A0248).